Here is a 1183-residue protein sequence, read N- to C-terminus: Spermatogenesis-associated protein 31G1 (1183 aa).

6 disordered regions span residues 109–153, 469–555, 661–686, 843–884, 973–1032, and 1048–1087; these read TPIG…FPTF, LMPA…SPWA, TVDD…SSEP, ASQG…VSEV, CLHS…TGLL, and QKRG…PAEA. Over residues 124–134 the composition is skewed to basic and acidic residues; it reads CRSEGRPRATE. Over residues 135-153 the composition is skewed to polar residues; sequence TQEQVLIQSPSPSRSFPTF. Basic and acidic residues predominate over residues 487-509; that stretch reads NPKERLSAPKDVRENLGYREHPH. The segment covering 671–685 has biased composition (polar residues); sequence TGKNTDNTKKCSSSE. Residues 847–858 show a composition bias toward pro residues; that stretch reads PNPPAVNPPQPT. Over residues 975–984 the composition is skewed to polar residues; that stretch reads HSSSQPQAQA. Residues 993 to 1002 show a composition bias toward basic residues; sequence QKSKRLKRKA. The segment covering 1069–1079 has biased composition (polar residues); the sequence is SPTNTRENNPA.

Expressed in kidney and testis. Expressed at lower levels in stomach, intestine, epididymis and ovary. Expressed at very low levels in heart and spleen.

Functionally, dispensable for normal development and fertility. This Mus musculus (Mouse) protein is Spermatogenesis-associated protein 31G1 (Spata31g1).